Consider the following 477-residue polypeptide: Epoxyalcohol synthase CYP5164B1 (477 aa).

Cysteine 421 serves as a coordination point for heme.

Belongs to the cytochrome P450 family. Heme is required as a cofactor.

It carries out the reaction (9S)-hydroperoxy-(10E,12Z)-octadecadienoate = (11S)-hydroxy-(9S,10S)-epoxy-(12Z)-octadecenoate. The enzyme catalyses (13S)-hydroperoxy-(9Z,11E)-octadecadienoate = 11-hydroxy-12,13-epoxy-(9Z)-octadecenoate. Its pathway is lipid metabolism; oxylipin biosynthesis. Functionally, cytochrome P450 epoxyalcohol synthase involved in the metabolism of oxylipins 'ectocarpins' natural products, such as hybridalactone, ecklonilactones and derivatives. Isomerizes the hydroperoxides into epoxyalcohols via epoxyallylic radical. Can use linoleic acid 9-hydroperoxide ((9S,10E,12Z)-9-hydroperoxy-10,12-octadecadienoic, 9-HPOD) as preferred substrate to produce (9S,10S,11S,12Z)-9,10-epoxy-11-hydroxy-12-octadecenoic acid and, to a lower extent, active with linoleate 13-hydroperoxide ((9Z,11E,13S)-13-hydroperoxy-9,11-octadecadienoic, 13-HPOD) to produce 11-hydroxy-12,13-epoxy-9-octadecenoic acid. No activity toward alpha-linolenic acid 9- and 13-hydroperoxides, and toward eicosapentaenoic acid 15-hydroperoxide. In Ectocarpus siliculosus (Brown alga), this protein is Epoxyalcohol synthase CYP5164B1.